We begin with the raw amino-acid sequence, 640 residues long: MSVPMTVKVQNLGRFLSAMIMPNISVFIAWGIISGLFIKSGWCPNQTLEKVLSPISVYLFPILIANTGGYLINGKRGAIVGSIAVVGAIISTAIPMLLGAMIIGPIGGWITYYFDKISKYKVKSGFEMLVNNFSVGILGVLLLFISFLCIGPMIEKLSCFLGYVVNLMINNHLLPFIAILIEPAKIFFLNNVINHGVLFPLGIQEVVKFNKSIFFLIESNPGPGIGVLMAWFFFGCDNIKKSLKEAIVIQLFGGIHEIYFPYVLKNPRLILALILGSITGIFILIVLRGGLISAASPGSIISILAMTPKGLYVINLLAIIISFLVSFLVSCMLLKISNRNHYVKGSNTKIEKDNFLINSSFQKNRTCIKSSLDSHKCIRNIIFACDAGMGSSAVAAGILRNKIHDLNIFNITVSNAAIDSIPNFGVDLIITHYSLTDRARKRNSNAKHLSLNSFLDNAFYNELSKYLVENNLDNNSSILDFSVRNQNNFSSKKNVFSLTKENIFLGQIASSKEEVIRFIGRQLVNQGYVKEEYIEAMLEREKMMSTWLGESIALPHGTIQSKDFILNTGIIFCQFPNGILFGDDPEDIAHLVIGVAARNNEHIPVVSNITNILDNNDVIKSLSITKNIDDVLYLFSRKNI.

A PTS EIIC type-2 domain is found at 12–343; the sequence is LGRFLSAMIM…LKISNRNHYV (332 aa). The next 6 membrane-spanning stretches (helical) occupy residues 24 to 45, 50 to 70, 134 to 155, 165 to 185, 273 to 292, and 313 to 334; these read ISVF…WCPN, KVLS…TGGY, SVGI…PMIE, VNLM…EPAK, LILG…GGLI, and VINL…CMLL. A PTS EIIB type-2 domain is found at 379–475; sequence RNIIFACDAG…YLVENNLDNN (97 aa). The Phosphocysteine intermediate; for EIIB activity role is filled by C385. C385 is subject to Phosphocysteine; by EIIA. A PTS EIIA type-2 domain is found at 496–638; the sequence is FSLTKENIFL…DDVLYLFSRK (143 aa). Residue H556 is the Tele-phosphohistidine intermediate; for EIIA activity of the active site. H556 is subject to Phosphohistidine; by HPr.

Homodimer. Post-translationally, an intramolecular phosphotransfer takes places between His-556 and Cys-385.

It is found in the cell inner membrane. It carries out the reaction D-mannitol(out) + N(pros)-phospho-L-histidyl-[protein] = D-mannitol 1-phosphate(in) + L-histidyl-[protein]. The phosphoenolpyruvate-dependent sugar phosphotransferase system (sugar PTS), a major carbohydrate active transport system, catalyzes the phosphorylation of incoming sugar substrates concomitantly with their translocation across the cell membrane. This system is involved in D-mannitol transport. The polypeptide is PTS system mannitol-specific EIICBA component (mtlA) (Buchnera aphidicola subsp. Baizongia pistaciae (strain Bp)).